Here is a 143-residue protein sequence, read N- to C-terminus: MAKKVAGQLKLQVKAGSANPSPPIGPALGQRGINIMEFCKAFNAATQEMEKGMPIPVVITYYQDKSFTFAMKQPPVSYWLKKEAKITSGSKTPGKGAKAGSLTKAQIKSIAEAKMKDLNAADIEGAMAMIEGSARAMGLEVVG.

This sequence belongs to the universal ribosomal protein uL11 family. In terms of assembly, part of the ribosomal stalk of the 50S ribosomal subunit. Interacts with L10 and the large rRNA to form the base of the stalk. L10 forms an elongated spine to which L12 dimers bind in a sequential fashion forming a multimeric L10(L12)X complex. One or more lysine residues are methylated.

In terms of biological role, forms part of the ribosomal stalk which helps the ribosome interact with GTP-bound translation factors. This chain is Large ribosomal subunit protein uL11, found in Rhizobium johnstonii (strain DSM 114642 / LMG 32736 / 3841) (Rhizobium leguminosarum bv. viciae).